A 200-amino-acid polypeptide reads, in one-letter code: Recombination protein RecR (200 aa).

Residues Cys59 to Cys74 form a C4-type zinc finger. The region spanning Ser82–Pro177 is the Toprim domain.

Belongs to the RecR family.

May play a role in DNA repair. It seems to be involved in an RecBC-independent recombinational process of DNA repair. It may act with RecF and RecO. This chain is Recombination protein RecR, found in Phenylobacterium zucineum (strain HLK1).